Consider the following 314-residue polypeptide: tRNA dimethylallyltransferase (314 aa).

9–16 is a binding site for ATP; it reads GPTAVGKT. 11-16 is a binding site for substrate; the sequence is TAVGKT. The segment at 34 to 37 is interaction with substrate tRNA; that stretch reads DSMQ.

It belongs to the IPP transferase family. In terms of assembly, monomer. Mg(2+) is required as a cofactor.

The catalysed reaction is adenosine(37) in tRNA + dimethylallyl diphosphate = N(6)-dimethylallyladenosine(37) in tRNA + diphosphate. Catalyzes the transfer of a dimethylallyl group onto the adenine at position 37 in tRNAs that read codons beginning with uridine, leading to the formation of N6-(dimethylallyl)adenosine (i(6)A). This Clostridium tetani (strain Massachusetts / E88) protein is tRNA dimethylallyltransferase.